The sequence spans 166 residues: Ribosome maturation factor RimM (166 aa).

The 73-residue stretch at 91-163 folds into the PRC barrel domain; the sequence is EDEFYEFQLI…KMQITPPEGW (73 aa).

This sequence belongs to the RimM family. Binds ribosomal protein uS19.

It is found in the cytoplasm. Functionally, an accessory protein needed during the final step in the assembly of 30S ribosomal subunit, possibly for assembly of the head region. Essential for efficient processing of 16S rRNA. May be needed both before and after RbfA during the maturation of 16S rRNA. It has affinity for free ribosomal 30S subunits but not for 70S ribosomes. This Sulfurihydrogenibium sp. (strain YO3AOP1) protein is Ribosome maturation factor RimM.